The sequence spans 440 residues: Chromosome partition protein MukF (440 aa).

A leucine-zipper region spans residues 208–236 (LSETSGTLRELQDTLEAAGDKLQANLLRI).

The protein belongs to the MukF family. In terms of assembly, interacts, and probably forms a ternary complex, with MukE and MukB via its C-terminal region. The complex formation is stimulated by calcium or magnesium. It is required for an interaction between MukE and MukB.

The protein resides in the cytoplasm. It localises to the nucleoid. In terms of biological role, involved in chromosome condensation, segregation and cell cycle progression. May participate in facilitating chromosome segregation by condensation DNA from both sides of a centrally located replisome during cell division. Not required for mini-F plasmid partitioning. Probably acts via its interaction with MukB and MukE. Overexpression results in anucleate cells. It has a calcium binding activity. The protein is Chromosome partition protein MukF of Escherichia coli (strain UTI89 / UPEC).